A 269-amino-acid chain; its full sequence is Formamidopyrimidine-DNA glycosylase (269 aa).

Proline 2 functions as the Schiff-base intermediate with DNA in the catalytic mechanism. Glutamate 3 serves as the catalytic Proton donor. The Proton donor; for beta-elimination activity role is filled by lysine 58. Positions 91, 110, and 150 each coordinate DNA. Residues 235 to 269 (SVYGCENKTCHFCKSKIIKIVQNQRSTFYCRKCQT) form an FPG-type zinc finger. Residue arginine 259 is the Proton donor; for delta-elimination activity of the active site.

This sequence belongs to the FPG family. In terms of assembly, monomer. Requires Zn(2+) as cofactor.

The enzyme catalyses Hydrolysis of DNA containing ring-opened 7-methylguanine residues, releasing 2,6-diamino-4-hydroxy-5-(N-methyl)formamidopyrimidine.. The catalysed reaction is 2'-deoxyribonucleotide-(2'-deoxyribose 5'-phosphate)-2'-deoxyribonucleotide-DNA = a 3'-end 2'-deoxyribonucleotide-(2,3-dehydro-2,3-deoxyribose 5'-phosphate)-DNA + a 5'-end 5'-phospho-2'-deoxyribonucleoside-DNA + H(+). Functionally, involved in base excision repair of DNA damaged by oxidation or by mutagenic agents. Acts as a DNA glycosylase that recognizes and removes damaged bases. Has a preference for oxidized purines, such as 7,8-dihydro-8-oxoguanine (8-oxoG). Has AP (apurinic/apyrimidinic) lyase activity and introduces nicks in the DNA strand. Cleaves the DNA backbone by beta-delta elimination to generate a single-strand break at the site of the removed base with both 3'- and 5'-phosphates. This is Formamidopyrimidine-DNA glycosylase from Ruthia magnifica subsp. Calyptogena magnifica.